The primary structure comprises 469 residues: Aspartyl/glutamyl-tRNA(Asn/Gln) amidotransferase subunit B (469 aa).

This sequence belongs to the GatB/GatE family. GatB subfamily. Heterotrimer of A, B and C subunits.

It carries out the reaction L-glutamyl-tRNA(Gln) + L-glutamine + ATP + H2O = L-glutaminyl-tRNA(Gln) + L-glutamate + ADP + phosphate + H(+). The catalysed reaction is L-aspartyl-tRNA(Asn) + L-glutamine + ATP + H2O = L-asparaginyl-tRNA(Asn) + L-glutamate + ADP + phosphate + 2 H(+). Functionally, allows the formation of correctly charged Asn-tRNA(Asn) or Gln-tRNA(Gln) through the transamidation of misacylated Asp-tRNA(Asn) or Glu-tRNA(Gln) in organisms which lack either or both of asparaginyl-tRNA or glutaminyl-tRNA synthetases. The reaction takes place in the presence of glutamine and ATP through an activated phospho-Asp-tRNA(Asn) or phospho-Glu-tRNA(Gln). In Methanococcus maripaludis (strain C7 / ATCC BAA-1331), this protein is Aspartyl/glutamyl-tRNA(Asn/Gln) amidotransferase subunit B.